Reading from the N-terminus, the 642-residue chain is Threonine--tRNA ligase (642 aa).

The 61-residue stretch at 1–61 (MPIITLPDGS…EEDASLEIIT (61 aa)) folds into the TGS domain. Positions 244-535 (DHRKIGKQLD…LIEEYAGFFP (292 aa)) are catalytic. Zn(2+) contacts are provided by Cys335, His386, and His512.

The protein belongs to the class-II aminoacyl-tRNA synthetase family. As to quaternary structure, homodimer. Zn(2+) is required as a cofactor.

The protein localises to the cytoplasm. It carries out the reaction tRNA(Thr) + L-threonine + ATP = L-threonyl-tRNA(Thr) + AMP + diphosphate + H(+). In terms of biological role, catalyzes the attachment of threonine to tRNA(Thr) in a two-step reaction: L-threonine is first activated by ATP to form Thr-AMP and then transferred to the acceptor end of tRNA(Thr). Also edits incorrectly charged L-seryl-tRNA(Thr). In Vibrio vulnificus (strain YJ016), this protein is Threonine--tRNA ligase.